A 189-amino-acid polypeptide reads, in one-letter code: Small ribosomal subunit protein uS5 (189 aa).

Residues 20-83 form the S5 DRBM domain; sequence FVDRLVHINR…ESAKRALIRV (64 aa).

It belongs to the universal ribosomal protein uS5 family. Part of the 30S ribosomal subunit. Contacts proteins S4 and S8.

Its function is as follows. With S4 and S12 plays an important role in translational accuracy. In terms of biological role, located at the back of the 30S subunit body where it stabilizes the conformation of the head with respect to the body. The protein is Small ribosomal subunit protein uS5 of Beijerinckia indica subsp. indica (strain ATCC 9039 / DSM 1715 / NCIMB 8712).